We begin with the raw amino-acid sequence, 85 residues long: uncharacterized protein (85 aa).

Ser-22 carries the post-translational modification Phosphoserine.

The protein resides in the cytoplasm. Its subcellular location is the nucleus. This is an uncharacterized protein from Saccharomyces cerevisiae (strain ATCC 204508 / S288c) (Baker's yeast).